Reading from the N-terminus, the 4128-residue chain is DNA-dependent protein kinase catalytic subunit (4128 aa).

Lys117 is modified (N6-acetyllysine). The stretch at 288–323 is one HEAT 1 repeat; it reads DNYVSLFEVLLKWCAHTNVELKKAALSALESFLKQV. A phosphoserine mark is found at Ser511 and Ser687. Lys828 is subject to N6-acetyllysine. A phosphoserine mark is found at Ser841 and Ser893. An HEAT 2 repeat occupies 1004–1040; the sequence is QDTVALLEAILDGIVDPVDSTLRDFCGRCIREFLKWS. Position 1065 is a phosphoserine (Ser1065). N6-acetyllysine is present on Lys1209. An interaction with C1D region spans residues 1503-1538; the sequence is LDLSCKQLASGLLELAFAFGGLCERLVSLLLNPAVL. Positions 1503–1538 are leucine-zipper; sequence LDLSCKQLASGLLELAFAFGGLCERLVSLLLNPAVL. The TPR 1 repeat unit spans residues 1723–1756; that stretch reads PMQSREFPPGTPRFNNYVDCMKKFLDALELSQSP. Position 1970 is an N6-acetyllysine (Lys1970). Residues 2050–2073 are disordered; sequence QSYSYSSQDPRPATGRFRRREQRD. Ser2056 is subject to Phosphoserine; by autocatalysis. Lys2259 bears the N6-acetyllysine mark. Residues 2436–3212 are KIP-binding; it reads LDIIYKMMPK…DNSMNVDQDG (777 aa). Thr2535 carries the phosphothreonine modification. Position 2609 is a phosphothreonine; by autocatalysis (Thr2609). Residue Ser2612 is modified to Phosphoserine; by autocatalysis. Residues Thr2638 and Thr2647 each carry the phosphothreonine; by autocatalysis modification. Positions 2737–2765 are may split the end of the DNA molecule, with the two strands separating around the region; that stretch reads EKLSLMYARKGVAEQKREKEIKSELKMKQ. At Ser2789 the chain carries Phosphoserine. Residues 2906–3539 form the FAT domain; the sequence is PAKRVRGKAR…VYPFIISSES (634 aa). TPR repeat units lie at residues 2920–2948 and 2949–2982; these read VLRW…SEIG and TKQI…QDWV. The disordered stretch occupies residues 3200–3222; the sequence is LPEDNSMNVDQDGDPSDRMEVQE. The residue at position 3205 (Ser3205) is a Phosphoserine. An N6-acetyllysine mark is found at Lys3241, Lys3260, Lys3621, Lys3638, and Lys3642. The 332-residue stretch at 3722-4053 folds into the PI3K/PI4K catalytic domain; sequence FDERVTVMAS…ICYAKRKLAG (332 aa). Positions 3728 to 3734 are G-loop; that stretch reads VMASLRR. Ser3731 and Ser3821 each carry phosphoserine. The tract at residues 3919-3927 is catalytic loop; the sequence is GIGDRHLNN. Positions 3939–3964 are activation loop; it reads GIDFGHAFGSATQFLPVPELMPFRLT. Position 4026 is a phosphoserine (Ser4026). Positions 4096 to 4128 constitute an FATC domain; sequence SGLSEETQVKCLMDQATDPNILGRTWEGWEPWM.

It belongs to the PI3/PI4-kinase family. In terms of assembly, DNA-PK is a heterotrimer of PRKDC and the Ku dimer (composed of XRCC6/Ku70 and XRCC5/Ku86). Formation of this complex may be promoted by interaction with ILF3. Component of the core long-range non-homologous end joining (NHEJ) complex (also named DNA-PK complex) composed of PRKDC, LIG4, XRCC4, XRCC6/Ku70, XRCC5/Ku86 and NHEJ1/XLF. Additional component of the NHEJ complex includes PAXX. Following autophosphorylation, PRKDC dissociates from DNA. Interacts with DNA-PKcs-interacting protein (KIP) with the region upstream the kinase domain. PRKDC alone also interacts with and phosphorylates DCLRE1C, thereby activating the latent endonuclease activity of this protein. Interacts with C1D. Interacts with TTI1 and TELO2. Interacts with CIB1. Interacts with SETX. Interacts with NR4A3; the DNA-dependent protein kinase complex DNA-PK phosphorylates and activates NR4A3 and prevents NR4A3 ubiquitination and degradation. Interacts with BRAT1. Part of the HDP-RNP complex composed of at least HEXIM1, PRKDC, XRCC5, XRCC6, paraspeckle proteins (SFPQ, NONO, PSPC1, RBM14, and MATR3) and NEAT1 RNA. Interacts with KAT5. Post-translationally, autophosphorylated at two clusters, the T2609 cluster and the S2056 cluster. Autophosphorylated on Ser-2056, Thr-2609, Thr-2638 and Thr-2647. Ser-2056 and Thr-2609 are DNA damage-inducible phosphorylation sites (inducible with ionizing radiation, IR) dephosphorylated by PPP5C. Autophosphorylation induces a conformational change that leads to remodeling of the DNA-PK complex, requisite for efficient end processing and DNA repair. Autophosphorylation in trans within DNA-PK complexes loaded on DNA ends leads to the dissociation of PRKDC from DNA and the transition into the short-range NHEJ complex. Autophosphorylation of the T2609 cluster is required for hematopoietic development and protein synthesis in erythrocytes precursors. S-nitrosylated by GAPDH. In terms of processing, polyubiquitinated by RNF144A, leading to proteasomal degradation.

It localises to the nucleus. The protein localises to the nucleolus. Its subcellular location is the cytoplasm. The protein resides in the cytosol. It carries out the reaction L-seryl-[protein] + ATP = O-phospho-L-seryl-[protein] + ADP + H(+). The catalysed reaction is L-threonyl-[protein] + ATP = O-phospho-L-threonyl-[protein] + ADP + H(+). With respect to regulation, activity seems to be attenuated by autophosphorylation. Binding to the SL1 region of U3 small nucleolar RNA promotes auto-phosphorylation activity. Inhibited by wortmannin. Its function is as follows. Serine/threonine-protein kinase that acts as a molecular sensor for DNA damage. Involved in DNA non-homologous end joining (NHEJ) required for double-strand break (DSB) repair and V(D)J recombination. Must be bound to DNA to express its catalytic properties. Promotes processing of hairpin DNA structures in V(D)J recombination by activation of the hairpin endonuclease artemis (DCLRE1C). Recruited by XRCC5 and XRCC6 to DNA ends and is required to (1) protect and align broken ends of DNA, thereby preventing their degradation, (2) and sequester the DSB for repair by NHEJ. Acts as a scaffold protein to aid the localization of DNA repair proteins to the site of damage. The assembly of the DNA-PK complex at DNA ends is also required for the NHEJ ligation step. Found at the ends of chromosomes, suggesting a further role in the maintenance of telomeric stability and the prevention of chromosomal end fusion. Also involved in modulation of transcription. As part of the DNA-PK complex, involved in the early steps of ribosome assembly by promoting the processing of precursor rRNA into mature 18S rRNA in the small-subunit processome. Binding to U3 small nucleolar RNA, recruits PRKDC and XRCC5/Ku86 to the small-subunit processome. Recognizes the substrate consensus sequence [ST]-Q. Phosphorylates 'Ser-139' of histone variant H2AX, thereby regulating DNA damage response mechanism. Phosphorylates ASF1A, DCLRE1C, c-Abl/ABL1, histone H1, HSPCA, c-jun/JUN, p53/TP53, PARP1, POU2F1, DHX9, FH, SRF, NHEJ1/XLF, XRCC1, XRCC4, XRCC5, XRCC6, WRN, MYC and RFA2. Can phosphorylate C1D not only in the presence of linear DNA but also in the presence of supercoiled DNA. Ability to phosphorylate p53/TP53 in the presence of supercoiled DNA is dependent on C1D. Acts as a regulator of the phosphatidylinositol 3-kinase/protein kinase B signal transduction by mediating phosphorylation of 'Ser-473' of protein kinase B (PKB/AKT1, PKB/AKT2, PKB/AKT3), promoting their activation. Contributes to the determination of the circadian period length by antagonizing phosphorylation of CRY1 'Ser-588' and increasing CRY1 protein stability, most likely through an indirect mechanism. Plays a role in the regulation of DNA virus-mediated innate immune response by assembling into the HDP-RNP complex, a complex that serves as a platform for IRF3 phosphorylation and subsequent innate immune response activation through the cGAS-STING pathway. Also regulates the cGAS-STING pathway by catalyzing phosphorylation of CGAS, thereby impairing CGAS oligomerization and activation. Also regulates the cGAS-STING pathway by mediating phosphorylation of PARP1. The chain is DNA-dependent protein kinase catalytic subunit (PRKDC) from Homo sapiens (Human).